Consider the following 136-residue polypeptide: Holo-[acyl-carrier-protein] synthase (136 aa).

Positions 8 and 57 each coordinate Mg(2+).

The protein belongs to the P-Pant transferase superfamily. AcpS family. It depends on Mg(2+) as a cofactor.

The protein localises to the cytoplasm. It catalyses the reaction apo-[ACP] + CoA = holo-[ACP] + adenosine 3',5'-bisphosphate + H(+). Functionally, transfers the 4'-phosphopantetheine moiety from coenzyme A to a Ser of acyl-carrier-protein. This chain is Holo-[acyl-carrier-protein] synthase, found in Azorhizobium caulinodans (strain ATCC 43989 / DSM 5975 / JCM 20966 / LMG 6465 / NBRC 14845 / NCIMB 13405 / ORS 571).